A 142-amino-acid polypeptide reads, in one-letter code: Galactose-6-phosphate isomerase subunit LacA (142 aa).

This sequence belongs to the LacAB/RpiB family. As to quaternary structure, heteromultimeric protein consisting of LacA and LacB.

The enzyme catalyses aldehydo-D-galactose 6-phosphate = keto-D-tagatose 6-phosphate. The protein operates within carbohydrate metabolism; D-galactose 6-phosphate degradation; D-tagatose 6-phosphate from D-galactose 6-phosphate: step 1/1. The chain is Galactose-6-phosphate isomerase subunit LacA from Staphylococcus aureus (strain JH9).